A 416-amino-acid chain; its full sequence is UDP-N-acetylmuramoylalanine--D-glutamate ligase (416 aa).

108–114 (GTTGKTT) contacts ATP.

Belongs to the MurCDEF family.

The protein resides in the cytoplasm. The catalysed reaction is UDP-N-acetyl-alpha-D-muramoyl-L-alanine + D-glutamate + ATP = UDP-N-acetyl-alpha-D-muramoyl-L-alanyl-D-glutamate + ADP + phosphate + H(+). Its pathway is cell wall biogenesis; peptidoglycan biosynthesis. Cell wall formation. Catalyzes the addition of glutamate to the nucleotide precursor UDP-N-acetylmuramoyl-L-alanine (UMA). The protein is UDP-N-acetylmuramoylalanine--D-glutamate ligase of Chlamydia trachomatis serovar L2b (strain UCH-1/proctitis).